A 263-amino-acid polypeptide reads, in one-letter code: Phosphoinositide-3-kinase-interacting protein 1 (263 aa).

The signal sequence occupies residues 1-21 (MLLAWVQAFLVSNMLLAEAYG). At 22 to 168 (SGGCFWDNGH…NSKEKKDLGT (147 aa)) the chain is on the extracellular side. A Kringle domain is found at 24-101 (GCFWDNGHLY…EKRPCENLSC (78 aa)). Cystine bridges form between Cys25/Cys101, Cys46/Cys82, and Cys70/Cys96. Asn98 carries N-linked (GlcNAc...) asparagine glycosylation. The chain crosses the membrane as a helical span at residues 169–189 (LGYVLGITMMVIIVAIGAGII). Over 190-263 (LGYSYKRGKD…LMGQAGTPGA (74 aa)) the chain is Cytoplasmic. Positions 242–251 (QTPVDPQEGS) are enriched in polar residues. Positions 242 to 263 (QTPVDPQEGSTPLMGQAGTPGA) are disordered.

It is found in the cell membrane. Its function is as follows. Negative regulator of hepatic phosphatidylinositol 3-kinase (PI3K) activity. The protein is Phosphoinositide-3-kinase-interacting protein 1 (PIK3IP1) of Pongo abelii (Sumatran orangutan).